The sequence spans 577 residues: Polyadenylate-binding protein, cytoplasmic and nuclear (577 aa).

The segment covering 1–10 (MADITDKTAE) has biased composition (basic and acidic residues). The interval 1 to 36 (MADITDKTAEQLENLNIQDDQKQAATGSESQSVENS) is disordered. Ala-2 carries the post-translational modification N-acetylalanine. Lys-7 is covalently cross-linked (Glycyl lysine isopeptide (Lys-Gly) (interchain with G-Cter in ubiquitin)). The required and sufficient for nuclear export stretch occupies residues 9–61 (AEQLENLNIQDDQKQAATGSESQSVENSSASLYVGDLEPSVSEAHLYDIFSPI). Over residues 11–27 (QLENLNIQDDQKQAATG) the composition is skewed to polar residues. Positions 12-17 (LENLNI) match the Nuclear export signal motif. 4 consecutive RRM domains span residues 38 to 116 (ASLY…WSQR), 126 to 203 (GNIF…PHLS), 219 to 296 (TNLY…RAQK), and 322 to 399 (VNLF…IAQR). At Arg-107 the chain carries Omega-N-methylarginine. Ser-249 carries the post-translational modification Phosphoserine. The tract at residues 281-317 (DSELNGEKLYVGRAQKKNERMHVLKKQYEAYRLEKMA) is required and sufficient for nuclear import. Ser-332 bears the Phosphoserine mark. Lys-337 participates in a covalent cross-link: Glycyl lysine isopeptide (Lys-Gly) (interchain with G-Cter in ubiquitin). Residue Ser-405 is modified to Phosphoserine. The interval 473–577 (PPQFRNGPVY…KEQEQQTEQA (105 aa)) is interaction with SUP35. In terms of domain architecture, PABC spans 489 to 568 (GFPRNANDNN…ASAAYESFKK (80 aa)).

Belongs to the polyadenylate-binding protein type-1 family. Binds to poly(A) mRNA to form a periodic structure with a packing density of one molecule per 25 adenylate residues. Interacts with the nuclear export factor CRM1 and with the importin SXM1. Interacts with RNA15, a component of the cleavage factor IA (CFIA) complex. Interacts with translation initiation factor eIF4G (TIF4631 or TIF4632) and release factor eRF3 (SUP35). Interacts with the PAB-dependent poly(A)-nuclease (PAN) complex regulatory subunit PAN3. Interacts with ARF1, DCP1, PBP1, the Hsp70 chaperone SSA1, and TPA1. Interacts with PAT1 in an RNA-dependent manner.

It localises to the cytoplasm. The protein resides in the nucleus. Binds the poly(A) tail of mRNA. Appears to be an important mediator of the multiple roles of the poly(A) tail in mRNA biogenesis, stability and translation. In the nucleus, interacts with the nuclear cleavage factor IA (CFIA), which is required for both mRNA cleavage and polyadenylation. Is also required for efficient mRNA export to the cytoplasm. Acts in concert with a poly(A)-specific nuclease (PAN) to affect poly(A) tail shortening, which may occur concomitantly with either nucleocytoplasmic mRNA transport or translational initiation. Regulates PAN activity via interaction with the stimulator PAN3 or the inhibitor PBP1. In the cytoplasm, affects both translation and mRNA decay. Stimulates translation by interaction with translation initiation factor eIF4G, a subunit of the cap-binding complex eIF4F, bringing the 5'- and 3'-ends of the mRNA in proximity. The formation of this circular mRNP structure appears to be critical for the synergistic effects of the cap and the poly(A) tail in facilitating translation initiation, recycling of ribosomes, and mRNA stability. Also regulates translation termination by recruiting eukaryotic release factor 3 (eRF3). Interaction with eRF3 is also required for regulation of normal mRNA decay through translation termination-coupled poly(A) shortening, probably mediated by PAN. Loss of PAB1 from the mRNP after deadenylation triggers mRNA degradation. Inhibits the major cytoplasmic mRNA deadenylase CCR4-NOT complex. Is also associated peripherally with COPI vesicles through its interaction with ARF1, and this is required for correct localization of the asymmetrically distributed ASH1 mRNA. The sequence is that of Polyadenylate-binding protein, cytoplasmic and nuclear (PAB1) from Saccharomyces cerevisiae (strain ATCC 204508 / S288c) (Baker's yeast).